Reading from the N-terminus, the 212-residue chain is Glycerol-3-phosphate acyltransferase (212 aa).

Transmembrane regions (helical) follow at residues isoleucine 3–serine 23, lysine 51–alanine 71, aspartate 78–phenylalanine 98, alanine 115–phenylalanine 135, and serine 139–threonine 159.

This sequence belongs to the PlsY family. In terms of assembly, probably interacts with PlsX.

The protein resides in the cell inner membrane. It catalyses the reaction an acyl phosphate + sn-glycerol 3-phosphate = a 1-acyl-sn-glycero-3-phosphate + phosphate. The protein operates within lipid metabolism; phospholipid metabolism. In terms of biological role, catalyzes the transfer of an acyl group from acyl-phosphate (acyl-PO(4)) to glycerol-3-phosphate (G3P) to form lysophosphatidic acid (LPA). This enzyme utilizes acyl-phosphate as fatty acyl donor, but not acyl-CoA or acyl-ACP. The protein is Glycerol-3-phosphate acyltransferase of Burkholderia multivorans (strain ATCC 17616 / 249).